The primary structure comprises 184 residues: MFDIGFSELVLLFVVGLIVLGPQRLPVAVRTVMGWVRTVRSLATNVQNELSQELKLKELQESIKKAEDLNISQLSPELSETVEELRQSAQKIKMNLEEKAAETNSSVEEQVQELKSAVQNSQGTATTEIEKNFDFPSGELSPAELAELAEEGEPMLEMGESDFSEDEQATASSNETIENIKEKV.

Residues 1–21 (MFDIGFSELVLLFVVGLIVLG) traverse the membrane as a helical segment. Over residues 149–168 (AEEGEPMLEMGESDFSEDEQ) the composition is skewed to acidic residues. The segment at 149–184 (AEEGEPMLEMGESDFSEDEQATASSNETIENIKEKV) is disordered.

It belongs to the TatB family. The Tat system comprises two distinct complexes: a TatABC complex, containing multiple copies of TatA, TatB and TatC subunits, and a separate TatA complex, containing only TatA subunits. Substrates initially bind to the TatABC complex, which probably triggers association of the separate TatA complex to form the active translocon.

It localises to the cell inner membrane. In terms of biological role, part of the twin-arginine translocation (Tat) system that transports large folded proteins containing a characteristic twin-arginine motif in their signal peptide across membranes. Together with TatC, TatB is part of a receptor directly interacting with Tat signal peptides. TatB may form an oligomeric binding site that transiently accommodates folded Tat precursor proteins before their translocation. The sequence is that of Sec-independent protein translocase protein TatB from Histophilus somni (strain 129Pt) (Haemophilus somnus).